Consider the following 248-residue polypeptide: Tyrosine recombinase XerD-like (248 aa).

The Core-binding (CB) domain occupies 1-72; the sequence is MIAFIEPFLA…TVNQFLYYLY (72 aa). The 157-residue stretch at 92-248 folds into the Tyr recombinase domain; sequence SLKPQLTRLD…PITLEKYYKM (157 aa). Residue Arg213 is part of the active site. The active-site O-(3'-phospho-DNA)-tyrosine intermediate is Tyr245.

Belongs to the 'phage' integrase family. XerD-like subfamily.

The protein resides in the cytoplasm. In terms of biological role, putative tyrosine recombinase. Not involved in the cutting and rejoining of the recombining DNA molecules on dif(SL) site. This chain is Tyrosine recombinase XerD-like, found in Streptococcus equi subsp. zooepidemicus (strain H70).